An 815-amino-acid chain; its full sequence is Plakophilin-2 (815 aa).

Residues 1–12 (MLKPHPEHKEQP) are compositionally biased toward basic and acidic residues. Disordered stretches follow at residues 1–31 (MLKPHPEHKEQPQDSFTPSGDSTPDASMAEE) and 76–105 (QLTLSRKKRKPKPADSSLAESQSSCQISSS). Residues 13–25 (QDSFTPSGDSTPD) show a composition bias toward polar residues. Positions 91-105 (SSLAESQSSCQISSS) are enriched in low complexity. ARM repeat units lie at residues 317–357 (KGKP…NQCF), 360–399 (PDAKRKILHLQGIPKLLKLMQNDSEELQWAAVSSLRNIVF), 402–442 (NENK…NLSS), 457–498 (PLTD…NLSS), 501–547 (PDGR…NLSY), 604–644 (PHGV…NLTA), 652–691 (AIAHFIVQKEGGLSQVKKLLQEAEKEELRISVSLLKNISR), 693–737 (RELH…NLSQ), and 740–783 (ASNT…TLWR).

Belongs to the beta-catenin family.

Its subcellular location is the nucleus. The protein resides in the cell junction. It is found in the desmosome. The protein localises to the cytoplasm. Required for development of the heart, potentially via cell-cell adhesion and modulation of expression of cardiac precursor genes. Plays a role in desmosome cell-cell junctions and their intracellular connectivity. The polypeptide is Plakophilin-2 (Danio rerio (Zebrafish)).